A 63-amino-acid chain; its full sequence is Cypmaclein (63 aa).

The protein belongs to the GASA family. Expressed in pollen (at protein level).

The sequence is that of Cypmaclein from Juniperus ashei (Ozark white cedar).